A 74-amino-acid polypeptide reads, in one-letter code: Amphipathic peptide CT1 (74 aa).

The N-terminal stretch at 1–23 is a signal peptide; sequence MKTQIVILFISMIMLQMFVQIEG. Residue Val-37 is modified to Valine amide. Positions 41–74 are excised as a propeptide; that stretch reads GLRNLDDLDDLDLDHLFDSDVSDADLRLLKQMFR.

The protein belongs to the non-disulfide-bridged peptide (NDBP) superfamily. Short antimicrobial peptide (group 4) family. Expressed by the venom gland.

It is found in the secreted. It localises to the target cell membrane. Functionally, antimicrobial peptide that is rapidly bactericidal against Gram-positive bacteria (MIC=12.5 ug/ml against S.aureus, and MIC=100 ug/ml against M.luteus). Is also active against clinical antibiotics-resistant bacterial strains. This is Amphipathic peptide CT1 from Scorpiops tibetanus (Scorpion).